The sequence spans 230 residues: 2,3-bisphosphoglycerate-dependent phosphoglycerate mutase (230 aa).

Substrate-binding positions include 8–15 (RHGESEWN), 21–22 (TG), R60, 87–90 (ERHY), K98, 114–115 (RR), and 183–184 (GN). H9 (tele-phosphohistidine intermediate) is an active-site residue. E87 acts as the Proton donor/acceptor in catalysis.

It belongs to the phosphoglycerate mutase family. BPG-dependent PGAM subfamily.

The catalysed reaction is (2R)-2-phosphoglycerate = (2R)-3-phosphoglycerate. The protein operates within carbohydrate degradation; glycolysis; pyruvate from D-glyceraldehyde 3-phosphate: step 3/5. Functionally, catalyzes the interconversion of 2-phosphoglycerate and 3-phosphoglycerate. The protein is 2,3-bisphosphoglycerate-dependent phosphoglycerate mutase of Streptococcus thermophilus (strain CNRZ 1066).